A 268-amino-acid chain; its full sequence is Stomatin homolog PYRAB06580 (268 aa).

The chain crosses the membrane as a helical span at residues 1–21 (MILPTNFFVTTIILLFILIFL). Coiled coils occupy residues 125-152 (GQAH…EATD) and 178-213 (KQAE…ISEH).

Belongs to the band 7/mec-2 family. In terms of assembly, homotrimer.

It localises to the membrane. In Pyrococcus abyssi (strain GE5 / Orsay), this protein is Stomatin homolog PYRAB06580.